The chain runs to 232 residues: Orotidine 5'-phosphate decarboxylase (232 aa).

Residues aspartate 13, lysine 35, 62–71 (DLKFHDIPNT), threonine 122, arginine 182, glutamine 191, glycine 211, and arginine 212 each bind substrate. Lysine 64 (proton donor) is an active-site residue.

It belongs to the OMP decarboxylase family. Type 1 subfamily. In terms of assembly, homodimer.

The enzyme catalyses orotidine 5'-phosphate + H(+) = UMP + CO2. It functions in the pathway pyrimidine metabolism; UMP biosynthesis via de novo pathway; UMP from orotate: step 2/2. Catalyzes the decarboxylation of orotidine 5'-monophosphate (OMP) to uridine 5'-monophosphate (UMP). The sequence is that of Orotidine 5'-phosphate decarboxylase from Pseudomonas fluorescens (strain Pf0-1).